A 403-amino-acid polypeptide reads, in one-letter code: uncharacterized protein (403 aa).

A compositionally biased stretch (polar residues) spans 55–88; that stretch reads LTGSPNPQATPKQENKSNFFSEKQSVRENGNSSA. Residues 55 to 95 form a disordered region; it reads LTGSPNPQATPKQENKSNFFSEKQSVRENGNSSAGEKKQKW. Serine 58 carries the post-translational modification Phosphoserine. Residues 113–177 enclose the J domain; that stretch reads QYYEILDLKK…NLRAHYDRTG (65 aa). Residues 263 to 283 form a helical membrane-spanning segment; the sequence is SIFYQLLPLIVVILFAFLSNF.

Its subcellular location is the endoplasmic reticulum membrane. This is an uncharacterized protein from Schizosaccharomyces pombe (strain 972 / ATCC 24843) (Fission yeast).